The following is a 262-amino-acid chain: Polyamine aminopropyltransferase (262 aa).

A PABS domain is found at 1-249 (MWITQEITPY…DIHRAAFALP (249 aa)). N29 serves as a coordination point for S-methyl-5'-thioadenosine. D83 contributes to the spermidine binding site. The active-site Proton acceptor is D155.

The protein belongs to the spermidine/spermine synthase family. Homodimer or homotetramer.

The protein resides in the cytoplasm. The enzyme catalyses S-adenosyl 3-(methylsulfanyl)propylamine + putrescine = S-methyl-5'-thioadenosine + spermidine + H(+). Its pathway is amine and polyamine biosynthesis; spermidine biosynthesis; spermidine from putrescine: step 1/1. Its function is as follows. Catalyzes the irreversible transfer of a propylamine group from the amino donor S-adenosylmethioninamine (decarboxy-AdoMet) to putrescine (1,4-diaminobutane) to yield spermidine. The polypeptide is Polyamine aminopropyltransferase (Helicobacter acinonychis (strain Sheeba)).